The sequence spans 1281 residues: SCL-interrupting locus protein homolog (1281 aa).

6 stretches are compositionally biased toward polar residues: residues 390–401 (VFKQSPLPNKLS), 461–475 (RNNS…NVNN), 528–560 (HLQS…STVH), 567–592 (EQEQ…SYSR), 770–790 (SKTT…STEQ), and 891–913 (QDIN…NTAE). Disordered stretches follow at residues 390 to 431 (VFKQ…QVSR), 450 to 592 (KSAS…SYSR), 765 to 790 (AESE…STEQ), and 879 to 915 (RDDA…AEID).

It localises to the cytoplasm. The protein localises to the cytosol. It is found in the cytoskeleton. Its subcellular location is the microtubule organizing center. The protein resides in the centrosome. It localises to the centriole. Its function is as follows. Plays an essential role in early embryonic development. Plays an important role in the regulation of centriole duplication. This Xenopus laevis (African clawed frog) protein is SCL-interrupting locus protein homolog (stil).